The following is a 369-amino-acid chain: MTGSLGYVETQRVVLAGPDDPLHLRGGGRLDHVEVAYETYGSLSPARDNAVFICHALTGDAHAAGLHVGSKKRGWWDNLIGPGKPVDTDRFFVISANLLGGCSGSTGPLSTDPATGAPYCLDFPMLHMSDLVAAHRRLVAHLGIERLHAAVGGSLGGMQVLQWVIDEPDALERAVLVAASSRLSPENIAFSAIGREAIMSDPDFCNGRYVEQGVFPWRGQKVARMMAHITYVSAQSLETKFGHRRRSRGDAWTLGPDYEVEHYLQHQGQVFLGRFDALSYLYLTRLLDYFDPFADPGTAAALRSTATRFQLTSFDSDWRFDSTQSARMTAELKALGVAVDWAELASPFGHDSFLLQPPGYHERIAEFLG.

In terms of domain architecture, AB hydrolase-1 spans 49-328 (NAVFICHALT…RFDSTQSARM (280 aa)). Catalysis depends on Ser154, which acts as the Nucleophile. Arg224 serves as a coordination point for substrate. Catalysis depends on residues Asp317 and His350. Asp351 lines the substrate pocket.

The protein belongs to the AB hydrolase superfamily. MetX family. In terms of assembly, homodimer.

The protein resides in the cytoplasm. It carries out the reaction L-homoserine + succinyl-CoA = O-succinyl-L-homoserine + CoA. The protein operates within amino-acid biosynthesis; L-methionine biosynthesis via de novo pathway; O-succinyl-L-homoserine from L-homoserine: step 1/1. In terms of biological role, transfers a succinyl group from succinyl-CoA to L-homoserine, forming succinyl-L-homoserine. In Nocardioides sp. (strain ATCC BAA-499 / JS614), this protein is Homoserine O-succinyltransferase.